The chain runs to 1038 residues: Rap guanine nucleotide exchange factor 1 (1038 aa).

Residue 10-140 (RLSPLHTFSD…DILTDETPSD (131 aa)) coordinates a nucleoside 3',5'-cyclic phosphate. Residues 234-316 (TDNHQVIRDI…KTNSYYRWVQ (83 aa)) form the DEP domain. 375–492 (ALSHLSTMVK…VRLKDYGEDV (118 aa)) is a binding site for a nucleoside 3',5'-cyclic phosphate. One can recognise an N-terminal Ras-GEF domain in the interval 516 to 654 (CGYSVMAGKA…DILTRIGSIR (139 aa)). Residues 795–1028 (DSQELAHQLF…MQLSYEIEPK (234 aa)) enclose the Ras-GEF domain.

As to quaternary structure, interacts (via C-terminus) with drn-1. Expressed specifically in neurons including the nerve ring, ventral and dorsal nerve cord motor neurons and tail ganglia.

In terms of biological role, guanine nucleotide-releasing protein. Together with GTPase drn-1, may regulate acetylcholine release at the neuromuscular junctions probably downstream of G-protein gsa-1 and adenylate cyclase acy-1. The protein is Rap guanine nucleotide exchange factor 1 (epac-1) of Caenorhabditis elegans.